Here is a 230-residue protein sequence, read N- to C-terminus: Endonuclease NucS (230 aa).

This sequence belongs to the NucS endonuclease family.

The protein resides in the cytoplasm. Cleaves both 3' and 5' ssDNA extremities of branched DNA structures. This is Endonuclease NucS from Corynebacterium aurimucosum (strain ATCC 700975 / DSM 44827 / CIP 107346 / CN-1) (Corynebacterium nigricans).